Reading from the N-terminus, the 206-residue chain is Guanylate kinase (206 aa).

In terms of domain architecture, Guanylate kinase-like spans 4–182 (ANLFIISAPS…AVQNLIHIIS (179 aa)). 11 to 18 (APSGAGKT) is a binding site for ATP.

Belongs to the guanylate kinase family.

It is found in the cytoplasm. The enzyme catalyses GMP + ATP = GDP + ADP. Functionally, essential for recycling GMP and indirectly, cGMP. This chain is Guanylate kinase, found in Coxiella burnetii (strain RSA 493 / Nine Mile phase I).